Consider the following 214-residue polypeptide: Large ribosomal subunit protein uL3 (214 aa).

Residues 133-155 form a disordered region; it reads ATHGNSRSHRVPGSTGQCQSPGR. Q151 bears the N5-methylglutamine mark.

The protein belongs to the universal ribosomal protein uL3 family. As to quaternary structure, part of the 50S ribosomal subunit. Forms a cluster with proteins L14 and L19. In terms of processing, methylated by PrmB.

Functionally, one of the primary rRNA binding proteins, it binds directly near the 3'-end of the 23S rRNA, where it nucleates assembly of the 50S subunit. The chain is Large ribosomal subunit protein uL3 from Cellvibrio japonicus (strain Ueda107) (Pseudomonas fluorescens subsp. cellulosa).